A 106-amino-acid polypeptide reads, in one-letter code: Small ribosomal subunit protein uS10 (106 aa).

The protein belongs to the universal ribosomal protein uS10 family. Part of the 30S ribosomal subunit.

Its function is as follows. Involved in the binding of tRNA to the ribosomes. The chain is Small ribosomal subunit protein uS10 from Pyrobaculum calidifontis (strain DSM 21063 / JCM 11548 / VA1).